Consider the following 864-residue polypeptide: DNA mismatch repair protein MutS (864 aa).

607 to 614 (GPNMGGKS) is an ATP binding site.

It belongs to the DNA mismatch repair MutS family.

Functionally, this protein is involved in the repair of mismatches in DNA. It is possible that it carries out the mismatch recognition step. This protein has a weak ATPase activity. In Neisseria meningitidis serogroup A / serotype 4A (strain DSM 15465 / Z2491), this protein is DNA mismatch repair protein MutS.